The primary structure comprises 458 residues: Chondroitin hydrolase (458 aa).

An N-terminal signal peptide occupies residues 1–22 (MVIVWYHQLLLVLLIFIGAAKG). An EGF-like domain is found at 358-401 (NLDKCRMERCEGRGECYLPRPKTNPAIYNFACRCERPYFGKSCE). Disulfide bonds link cysteine 362–cysteine 373, cysteine 367–cysteine 389, and cysteine 391–cysteine 400.

This sequence belongs to the glycosyl hydrolase 56 family.

Endo-beta-galactosaminidase that specifically hydrolyzes chondroitin, releasing GlcUA-beta-(1-&gt;3)-GalNAc-beta-(1-&gt;4)-GlcUA-beta-(1-&gt;3)-GalNAc as the main product. Also hydrolyzes to a lesser extent chondroitin sulfates (CS-A, CS-C) and hyaluronic acid. May regulate the function of chondroitin in cell division. This is Chondroitin hydrolase from Caenorhabditis elegans.